Here is a 399-residue protein sequence, read N- to C-terminus: Succinate--CoA ligase [ADP-forming] subunit beta (399 aa).

Positions Lys-9–Glu-254 constitute an ATP-grasp domain. ATP-binding positions include Lys-46, Gly-53–Gly-55, Glu-109, Ala-112, and Glu-117. Mg(2+) contacts are provided by Asn-209 and Asp-223. Substrate contacts are provided by residues Asn-274 and Gly-331–Met-333.

It belongs to the succinate/malate CoA ligase beta subunit family. As to quaternary structure, heterotetramer of two alpha and two beta subunits. The cofactor is Mg(2+).

It carries out the reaction succinate + ATP + CoA = succinyl-CoA + ADP + phosphate. The catalysed reaction is GTP + succinate + CoA = succinyl-CoA + GDP + phosphate. It participates in carbohydrate metabolism; tricarboxylic acid cycle; succinate from succinyl-CoA (ligase route): step 1/1. Its function is as follows. Succinyl-CoA synthetase functions in the citric acid cycle (TCA), coupling the hydrolysis of succinyl-CoA to the synthesis of either ATP or GTP and thus represents the only step of substrate-level phosphorylation in the TCA. The beta subunit provides nucleotide specificity of the enzyme and binds the substrate succinate, while the binding sites for coenzyme A and phosphate are found in the alpha subunit. The chain is Succinate--CoA ligase [ADP-forming] subunit beta from Caulobacter sp. (strain K31).